We begin with the raw amino-acid sequence, 299 residues long: Taste receptor type 2 member 19 (299 aa).

Residue methionine 1 is a topological domain, extracellular. A helical transmembrane segment spans residues 2–22 (MCFLLIISSILVVFAFVLGNV). At 23-55 (ANGFIALVNVIDWVNTRKISSAEQILTALVVSR) the chain is on the cytoplasmic side. The chain crosses the membrane as a helical span at residues 56–76 (IGLLWVMLFLWYATVFNSALY). The Extracellular segment spans residues 77 to 87 (GLEVRIVASNA). The helical transmembrane segment at 88 to 108 (WAVTNHFSMWLAASLSIFCLL) threads the bilayer. Residues 109–127 (KIANFSNLISLHLKKRIKS) lie on the Cytoplasmic side of the membrane. A helical transmembrane segment spans residues 128–148 (VVLVILLGPLVFLICNLAVIT). Residues 149–181 (MDERVWTKEYEGNVTWKIKLRNAIHLSSLTVTT) are Extracellular-facing. The N-linked (GlcNAc...) asparagine glycan is linked to asparagine 161. The chain crosses the membrane as a helical span at residues 182-202 (LANLIPFTLSLICFLLLICSL). The Cytoplasmic portion of the chain corresponds to 203–226 (CKHLKKMRLHSKGSQDPSTKVHIK). A helical transmembrane segment spans residues 227 to 247 (ALQTVTSFLMLFAIYFLCIIT). The Extracellular segment spans residues 248–259 (STWNLRTQQSKL). The helical transmembrane segment at 260–280 (VLLLCQTVAIMYPSFHSFILI) threads the bilayer. The Cytoplasmic segment spans residues 281–299 (MGSRKLKQTFLSVLWQMTR).

The protein belongs to the G-protein coupled receptor T2R family. Expressed in subsets of taste receptor cells of the tongue and exclusively in gustducin-positive cells.

The protein localises to the membrane. Functionally, receptor that may play a role in the perception of bitterness and is gustducin-linked. May play a role in sensing the chemical composition of the gastrointestinal content. The activity of this receptor may stimulate alpha gustducin, mediate PLC-beta-2 activation and lead to the gating of TRPM5. In Homo sapiens (Human), this protein is Taste receptor type 2 member 19 (TAS2R19).